The chain runs to 280 residues: Fructose-1,6-bisphosphatase class 1 (280 aa).

E64, D83, L85, and D86 together coordinate Mg(2+). Residues 86–89 (DGSS), Y189, and K220 contribute to the substrate site. E226 provides a ligand contact to Mg(2+).

It belongs to the FBPase class 1 family. In terms of assembly, homotetramer. Requires Mg(2+) as cofactor.

The protein resides in the cytoplasm. The enzyme catalyses beta-D-fructose 1,6-bisphosphate + H2O = beta-D-fructose 6-phosphate + phosphate. Its pathway is carbohydrate biosynthesis; gluconeogenesis. The polypeptide is Fructose-1,6-bisphosphatase class 1 (Campylobacter jejuni subsp. jejuni serotype O:2 (strain ATCC 700819 / NCTC 11168)).